The sequence spans 101 residues: MEGVPSVRDSLVRARILVRGVVQGVFFRASMREEALRLGLSGWVRNLPDGESVEAVVEGRGDAVERIICWCLRGPPAARVRELRVELEPYKGEFRGFEIRY.

Residues 13–101 enclose the Acylphosphatase-like domain; it reads RARILVRGVV…GEFRGFEIRY (89 aa). Active-site residues include Arg28 and Asn46.

Belongs to the acylphosphatase family.

It catalyses the reaction an acyl phosphate + H2O = a carboxylate + phosphate + H(+). The chain is Acylphosphatase (acyP) from Aeropyrum pernix (strain ATCC 700893 / DSM 11879 / JCM 9820 / NBRC 100138 / K1).